An 829-amino-acid chain; its full sequence is Exocyst complex component SEC10b (829 aa).

The stretch at R244–S266 forms a coiled coil.

It belongs to the SEC10 family. The exocyst complex is composed of SEC3, SEC5, SEC6, SEC8, SEC10, EXO70A1 and EXO84B. Interacts with EXO84B. Binds to EXO70E2. Expressed in seedlings, roots, leaves and flowers.

It localises to the cytoplasm. Its subcellular location is the cytosol. The protein localises to the secreted. The protein resides in the extracellular exosome. Component of the exocyst complex involved in the docking of exocytic vesicles with fusion sites on the plasma membrane during regulated or polarized secretion. Involved in polarized cell growth and organ morphogenesis. During cytokinesis, involved in cell plate initiation, cell plate maturation and formation of new primary cell wall. This Arabidopsis thaliana (Mouse-ear cress) protein is Exocyst complex component SEC10b.